Consider the following 717-residue polypeptide: Fatty acid oxidation complex subunit alpha (717 aa).

Residues methionine 1 to alanine 190 are enoyl-CoA hydratase/isomerase. Aspartate 298 contacts substrate. Positions histidine 313 to glycine 717 are 3-hydroxyacyl-CoA dehydrogenase. NAD(+) is bound by residues methionine 326, aspartate 345, valine 402–glutamate 404, lysine 409, and serine 431. Residue histidine 452 is the For 3-hydroxyacyl-CoA dehydrogenase activity of the active site. Position 455 (asparagine 455) interacts with NAD(+). Asparagine 502 lines the substrate pocket.

It in the N-terminal section; belongs to the enoyl-CoA hydratase/isomerase family. The protein in the C-terminal section; belongs to the 3-hydroxyacyl-CoA dehydrogenase family. In terms of assembly, heterotetramer of two alpha chains (FadB) and two beta chains (FadA).

The enzyme catalyses a (3S)-3-hydroxyacyl-CoA + NAD(+) = a 3-oxoacyl-CoA + NADH + H(+). It carries out the reaction a (3S)-3-hydroxyacyl-CoA = a (2E)-enoyl-CoA + H2O. It catalyses the reaction a 4-saturated-(3S)-3-hydroxyacyl-CoA = a (3E)-enoyl-CoA + H2O. The catalysed reaction is (3S)-3-hydroxybutanoyl-CoA = (3R)-3-hydroxybutanoyl-CoA. The enzyme catalyses a (3Z)-enoyl-CoA = a 4-saturated (2E)-enoyl-CoA. It carries out the reaction a (3E)-enoyl-CoA = a 4-saturated (2E)-enoyl-CoA. Its pathway is lipid metabolism; fatty acid beta-oxidation. Involved in the aerobic and anaerobic degradation of long-chain fatty acids via beta-oxidation cycle. Catalyzes the formation of 3-oxoacyl-CoA from enoyl-CoA via L-3-hydroxyacyl-CoA. It can also use D-3-hydroxyacyl-CoA and cis-3-enoyl-CoA as substrate. The polypeptide is Fatty acid oxidation complex subunit alpha (Acinetobacter baumannii (strain ACICU)).